A 53-amino-acid chain; its full sequence is Mannose/glucose-specific lectin alpha 2 chain (53 aa).

The protein belongs to the leguminous lectin family. In terms of assembly, tetramer of two alpha and two beta chains.

The polypeptide is Mannose/glucose-specific lectin alpha 2 chain (Lathyrus ochrus (Cyprus-vetch)).